We begin with the raw amino-acid sequence, 157 residues long: Putative pre-16S rRNA nuclease (157 aa).

Belongs to the YqgF nuclease family.

The protein localises to the cytoplasm. Could be a nuclease involved in processing of the 5'-end of pre-16S rRNA. The polypeptide is Putative pre-16S rRNA nuclease (Ruegeria sp. (strain TM1040) (Silicibacter sp.)).